Here is a 661-residue protein sequence, read N- to C-terminus: B3 domain-containing protein Os12g0591400 (661 aa).

4 DNA-binding regions (TF-B3) span residues 2–95 (GDQK…FNPS), 197–290 (KTRC…FNPS), 437–535 (LYIT…FKES), and 562–658 (TNLT…IRKG).

The protein resides in the nucleus. This Oryza sativa subsp. japonica (Rice) protein is B3 domain-containing protein Os12g0591400.